Here is a 379-residue protein sequence, read N- to C-terminus: Cytochrome b (379 aa).

The next 4 membrane-spanning stretches (helical) occupy residues 33 to 53 (FGSL…FLAM), 77 to 98 (WLIR…YLHI), 113 to 133 (WNIG…GYVL), and 178 to 198 (FFAF…IHLL). 2 residues coordinate heme b: histidine 83 and histidine 97. Heme b contacts are provided by histidine 182 and histidine 196. Histidine 201 is an a ubiquinone binding site. A run of 4 helical transmembrane segments spans residues 226–246 (YKDL…ALFY), 288–308 (LGGV…PILH), 320–340 (ASQL…WIGG), and 347–367 (YIII…VLNP).

Belongs to the cytochrome b family. In terms of assembly, the cytochrome bc1 complex contains 3 respiratory subunits (MT-CYB, CYC1 and UQCRFS1), 2 core proteins (UQCRC1 and UQCRC2) and probably 6 low-molecular weight proteins. Heme b serves as cofactor.

The protein resides in the mitochondrion inner membrane. Component of the ubiquinol-cytochrome c reductase complex (complex III or cytochrome b-c1 complex) that is part of the mitochondrial respiratory chain. The b-c1 complex mediates electron transfer from ubiquinol to cytochrome c. Contributes to the generation of a proton gradient across the mitochondrial membrane that is then used for ATP synthesis. This chain is Cytochrome b (mt-cyb), found in Anguilla dieffenbachii (New Zealand longfin eel).